We begin with the raw amino-acid sequence, 162 residues long: Interleukin-15 (162 aa).

A signal peptide spans 1–29 (MRISKPHLRSVSIQCYLCLLLNSHFLTEA). The propeptide occupies 30-48 (GIHVFILGCFSAGLPKTEA). Intrachain disulfides connect C83–C133 and C90–C136. The N-linked (GlcNAc...) asparagine glycan is linked to N127.

This sequence belongs to the IL-15/IL-21 family.

It localises to the secreted. Its function is as follows. Cytokine that plays a major role in the development of inflammatory and protective immune responses to microbial invaders and parasites by modulating immune cells of both the innate and adaptive immune systems. Stimulates the proliferation of natural killer cells, T-cells and B-cells and promotes the secretion of several cytokines. In monocytes, induces the production of IL8 and monocyte chemotactic protein 1/CCL2, two chemokines that attract neutrophils and monocytes respectively to sites of infection. Unlike most cytokines, which are secreted in soluble form, IL15 is expressed in association with its high affinity IL15RA on the surface of IL15-producing cells and delivers signals to target cells that express IL2RB and IL2RG receptor subunits. Binding to its receptor triggers the phosphorylation of JAK1 and JAK3 and the recruitment and subsequent phosphorylation of signal transducer and activator of transcription-3/STAT3 and STAT5. In mast cells, induces the rapid tyrosine phosphorylation of STAT6 and thereby controls mast cell survival and release of cytokines such as IL4. This is Interleukin-15 (IL15) from Macaca mulatta (Rhesus macaque).